Reading from the N-terminus, the 432-residue chain is Trigger factor (432 aa).

One can recognise a PPIase FKBP-type domain in the interval 161–246; it reads EDRVTIDFTG…LKKVEERELP (86 aa).

This sequence belongs to the FKBP-type PPIase family. Tig subfamily. As to quaternary structure, homodimer and monomer. In vivo most of the ribosomes are in complex with monomeric TF. Uncomplexed TF, however, is in a monomer-dimer equilibrium with approximately two thirds of TF existing in a dimeric state.

The protein localises to the cytoplasm. It carries out the reaction [protein]-peptidylproline (omega=180) = [protein]-peptidylproline (omega=0). Functionally, involved in protein export. Acts as a chaperone by maintaining the newly synthesized protein in an open conformation. Functions as a peptidyl-prolyl cis-trans isomerase. The protein is Trigger factor of Shigella boydii serotype 18 (strain CDC 3083-94 / BS512).